Consider the following 573-residue polypeptide: Protein translocase subunit SecD (573 aa).

A helical transmembrane segment spans residues tyrosine 13 to aspartate 33. Residues alanine 127–proline 200 are disordered. Pro residues-rich tracts occupy residues glutamine 135–alanine 154 and serine 161–glutamate 194. A run of 5 helical transmembrane segments spans residues alanine 385–tyrosine 405, leucine 410–leucine 430, alanine 441–phenylalanine 461, isoleucine 489–glycine 509, and phenylalanine 514–tryptophan 534.

Belongs to the SecD/SecF family. SecD subfamily. In terms of assembly, forms a complex with SecF. Part of the essential Sec protein translocation apparatus which comprises SecA, SecYEG and auxiliary proteins SecDF. Other proteins may also be involved.

It is found in the cell membrane. Its function is as follows. Part of the Sec protein translocase complex. Interacts with the SecYEG preprotein conducting channel. SecDF uses the proton motive force (PMF) to complete protein translocation after the ATP-dependent function of SecA. The chain is Protein translocase subunit SecD from Mycobacterium tuberculosis (strain CDC 1551 / Oshkosh).